The following is a 433-amino-acid chain: Adenylosuccinate synthetase (433 aa).

GTP-binding positions include 11–17 (GDEGKGK) and 39–41 (GHT). D12 (proton acceptor) is an active-site residue. Mg(2+) contacts are provided by D12 and G39. IMP-binding positions include 12 to 15 (DEGK), 37 to 40 (NAGH), T134, R148, N230, T245, and R309. The Proton donor role is filled by H40. 305–311 (VTTGRKR) contacts substrate. Residues R311, 337–339 (KLD), and 419–421 (GTG) contribute to the GTP site.

The protein belongs to the adenylosuccinate synthetase family. As to quaternary structure, homodimer. It depends on Mg(2+) as a cofactor.

The protein localises to the cytoplasm. It carries out the reaction IMP + L-aspartate + GTP = N(6)-(1,2-dicarboxyethyl)-AMP + GDP + phosphate + 2 H(+). The protein operates within purine metabolism; AMP biosynthesis via de novo pathway; AMP from IMP: step 1/2. Functionally, plays an important role in the de novo pathway and in the salvage pathway of purine nucleotide biosynthesis. Catalyzes the first committed step in the biosynthesis of AMP from IMP. In Saccharomyces cerevisiae (strain YJM789) (Baker's yeast), this protein is Adenylosuccinate synthetase.